Reading from the N-terminus, the 95-residue chain is uncharacterized protein (95 aa).

Basic and acidic residues-rich tracts occupy residues 1-28 and 41-53; these read MRRA…KERC and DERV…KGRP. A disordered region spans residues 1-73; it reads MRRAEVKRSA…RTSRAGSSWQ (73 aa).

This is an uncharacterized protein from Homo sapiens (Human).